Reading from the N-terminus, the 213-residue chain is Transmembrane protein 186 (213 aa).

Residues methionine 1–threonine 79 lie on the Mitochondrial matrix side of the membrane. The chain crosses the membrane as a helical span at residues alanine 80–leucine 100. Residues asparagine 101–threonine 102 are Mitochondrial intermembrane-facing. The helical transmembrane segment at valine 103–phenylalanine 123 threads the bilayer. The Mitochondrial matrix segment spans residues leucine 124–lysine 213.

The protein belongs to the TMEM186 family. As to quaternary structure, part of the mitochondrial complex I assembly/MCIA complex that comprises at least the core subunits TMEM126B, NDUFAF1, ECSIT and ACAD9 and complement subunits such as COA1 and TMEM186. Interacts with MT-ND3.

It is found in the mitochondrion inner membrane. Functionally, as part of the MCIA complex, required for efficient assembly of the mitochondrial complex I. This chain is Transmembrane protein 186, found in Homo sapiens (Human).